The primary structure comprises 121 residues: Large ribosomal subunit protein bL21c (121 aa).

It belongs to the bacterial ribosomal protein bL21 family. In terms of assembly, part of the 50S ribosomal subunit.

It is found in the plastid. Its subcellular location is the chloroplast. Functionally, this protein binds to 23S rRNA. In Chaetosphaeridium globosum (Charophycean green alga), this protein is Large ribosomal subunit protein bL21c.